A 454-amino-acid chain; its full sequence is tRNA-2-methylthio-N(6)-dimethylallyladenosine synthase (454 aa).

The MTTase N-terminal domain maps to 6–122; that stretch reads RRYHITTFGC…LQDLLQEVLA (117 aa). [4Fe-4S] cluster is bound by residues cysteine 15, cysteine 51, cysteine 85, cysteine 157, cysteine 161, and cysteine 164. The region spanning 143-380 is the Radical SAM core domain; that stretch reads RESTVTAWVN…NHLVAIKAAE (238 aa). A TRAM domain is found at 383–447; the sequence is QRYLGRIEEV…AFSLTGEPVK (65 aa).

This sequence belongs to the methylthiotransferase family. MiaB subfamily. Monomer. The cofactor is [4Fe-4S] cluster.

The protein localises to the cytoplasm. It carries out the reaction N(6)-dimethylallyladenosine(37) in tRNA + (sulfur carrier)-SH + AH2 + 2 S-adenosyl-L-methionine = 2-methylsulfanyl-N(6)-dimethylallyladenosine(37) in tRNA + (sulfur carrier)-H + 5'-deoxyadenosine + L-methionine + A + S-adenosyl-L-homocysteine + 2 H(+). Catalyzes the methylthiolation of N6-(dimethylallyl)adenosine (i(6)A), leading to the formation of 2-methylthio-N6-(dimethylallyl)adenosine (ms(2)i(6)A) at position 37 in tRNAs that read codons beginning with uridine. The polypeptide is tRNA-2-methylthio-N(6)-dimethylallyladenosine synthase (Gloeothece citriformis (strain PCC 7424) (Cyanothece sp. (strain PCC 7424))).